We begin with the raw amino-acid sequence, 639 residues long: Splicing factor 1 (639 aa).

2 disordered regions span residues 1 to 42 and 65 to 94; these read MATG…VIPP and LRTGDLGIPPNPEDRSPSPEPIYNSEGKRL. An N-acetylalanine modification is found at A2. S14 carries the post-translational modification Phosphoserine. Residues 15 to 19 carry the Nuclear localization signal motif; it reads KKRKR. Phosphoserine; by PKG is present on S20. Residues S80 and S82 each carry the phosphoserine modification. Phosphotyrosine is present on Y87. The residue at position 89 (S89) is a Phosphoserine. The 82-residue stretch at 141–222 folds into the KH domain; the sequence is MIPQDEYPEI…ENVKKAVEQI (82 aa). The CCHC-type zinc finger occupies 277-296; it reads TVCTKCGGAGHIASDCKFQR. Residues 325 to 639 are disordered; that stretch reads VPASVGSTSG…PAPPPPPPQN (315 aa). Positions 335-350 are enriched in low complexity; the sequence is PATTPLASAPRPAAPA. Residues 382–394 are compositionally biased toward gly residues; that stretch reads MHGGGPGGPGGGP. Positions 418-447 are enriched in pro residues; that stretch reads NGPPPPWMQPPPPPMNQGPHPPGHHGPPPM. Phosphoserine is present on L463. Position 467 is an omega-N-methylarginine (K467). Pro residues predominate over residues 470-499; the sequence is MPPPPMGMMPPPPPPPSGQPPPPPSGPLPP. Low complexity-rich tracts occupy residues 515 to 534 and 542 to 566; these read SSMASSTPLPWQQNTTTTTT and PPWQQQQAAAAASPGAPQMQGNPTM. Composition is skewed to pro residues over residues 567 to 591 and 598 to 608; these read VPLPPGVQPPLPPGAPPPPPPPPPG and APPPPPPPPMD. Low complexity predominate over residues 615–625; that stretch reads MMGMGVAGMPP. The span at 626–639 shows a compositional bias: pro residues; that stretch reads FGMPPAPPPPPPQN.

The protein belongs to the BBP/SF1 family. Binds U2AF2. Interacts with U1 snRNA. Binds EWSR1, FUS and TAF15. Interacts with RBM17. Phosphorylation on Ser-20 interferes with U2AF2 binding and spliceosome assembly. Isoform 6 is phosphorylated on Ser-463. Detected in lung, ovary, adrenal gland, colon, kidney, muscle, pancreas, thyroid, placenta, brain, liver and heart.

It is found in the nucleus. Necessary for the ATP-dependent first step of spliceosome assembly. Binds to the intron branch point sequence (BPS) 5'-UACUAAC-3' of the pre-mRNA. May act as transcription repressor. This Homo sapiens (Human) protein is Splicing factor 1 (SF1).